Here is a 140-residue protein sequence, read N- to C-terminus: Anti-sigma F factor (140 aa).

The protein belongs to the anti-sigma-factor family.

The enzyme catalyses L-seryl-[protein] + ATP = O-phospho-L-seryl-[protein] + ADP + H(+). The catalysed reaction is L-threonyl-[protein] + ATP = O-phospho-L-threonyl-[protein] + ADP + H(+). Binds to sigma F and blocks its ability to form an RNA polymerase holoenzyme (E-sigma F). Phosphorylates SpoIIAA on a serine residue. This phosphorylation may enable SpoIIAA to act as an anti-anti-sigma factor that counteracts SpoIIAB and thus releases sigma F from inhibition. In Clostridium perfringens (strain SM101 / Type A), this protein is Anti-sigma F factor.